The chain runs to 388 residues: uncharacterized protein (388 aa).

It is found in the mitochondrion. This is an uncharacterized protein from Dictyostelium citrinum (Slime mold).